The sequence spans 261 residues: Carbonic anhydrase 1 (261 aa).

The tract at residues 1–31 (MASPDWGYDDKNGPEQWSKLYPIANGNNQSP) is disordered. The residue at position 2 (A2) is an N-acetylalanine. The region spanning 4 to 261 (PDWGYDDKNG…LKGRTVRASF (258 aa)) is the Alpha-carbonic anhydrase domain. Residue H65 is the Proton donor/acceptor of the active site. The Zn(2+) site is built by H95, H97, and H120. Substrate-binding positions include T200 and 200-201 (TH). A disordered region spans residues 240-261 (VPMQHNNRPTQPLKGRTVRASF).

This sequence belongs to the alpha-carbonic anhydrase family. Zn(2+) is required as a cofactor.

The protein localises to the cytoplasm. It carries out the reaction hydrogencarbonate + H(+) = CO2 + H2O. It catalyses the reaction urea = cyanamide + H2O. Inhibited by acetazolamide. In terms of biological role, catalyzes the reversible hydration of carbon dioxide. Can hydrate cyanamide to urea. This Gorilla gorilla gorilla (Western lowland gorilla) protein is Carbonic anhydrase 1 (CA1).